Reading from the N-terminus, the 346-residue chain is Lipase chaperone (346 aa).

Residues 10 to 30 (TIVFGVITSVLLLLLLIYYVF) form a helical membrane-spanning segment.

This sequence belongs to the lipase chaperone family.

The protein resides in the cell inner membrane. Its function is as follows. May be involved in the folding of the extracellular lipase during its passage through the periplasm. The sequence is that of Lipase chaperone (lifO) from Acinetobacter venetianus (strain ATCC 31012 / DSM 23050 / BCRC 14357 / CCUG 45561 / CIP 110063 / KCTC 2702 / LMG 19082 / RAG-1).